We begin with the raw amino-acid sequence, 1699 residues long: MKMASNDASAAAVVNSNNDTAKSSSDGVLSSMAVTFKRALGGRAKQPPPRETPQRPPRPPTPELVKKIPPPPPNGEDELVVSYSVKDGVSGLPELSTVRQPDEANTAFSVPPLNQRENRDAKEPLTGTILEMWDGEIYHYGLYVERGLVLGVHKPPAAISLAKVELTPLSLFWRPVYTPQYLISPDTLKRLHGESFPYTAFDNNCYAFCCWVLDLNDSWLSRRMIQRTTGFFRPYQDWNRKPLPTMDDSKLKKVANVFLCALSSLFTRPIKDIIGKLRPLNILNILASCDWTFAGIVESLILLAELFGVFWTPPDVSAMIAPLLGDYELQGPEDLAVELVPIVMGGIGLVLGFTKEKIGKMLSSAASTLRACKDLGAYGLEILKLVMKWFFPKKEEANELAMVRSIEDAVLDLEAIENNHMTTLLKDKDSLATYMRTLDLEEEKARKLSTKSASPDIVGTINALLARIAAARSLVHRAKEELSSRLRPVVVMISGKPGIGKTHLARELAKRIAASLTGDQRVGLIPRNGVDHWDAYKGERVVLWDDYGMSNPIHDALRLQELADTCPLTLNCDRIENKGKVFDSDAIIITTNLANPAPLDYVNFEACSRRIDFLVYAEAPEVEKAKRDFPGQPDMWKNAFSPDFSHIKLALAPQGGFDKNGNTPHGKGVMKTLTTGSLIARASGLLHERLDEYELQGPALTTFNFDRNKVLAFRQLAAENKYGLMDTMKVGRQLKDVRTMPELKQALKNISIKRCQIVYSGCTYTLESDGKGNVKVDRVQSATVQTNHELAGALHHLRCARIRYYVKCVQEALYSIIQIAGAAFVTTRIVKRMNIQDLWSKPQVEDTEDTANKDGCPKPKDDEEFVVSSDDIKTEGKKGKNKTGRGKKHTAFSSKGLSDEEYDEYKRIREERNGKYSIEEYLQDRDKYYEEVAIARATEEDFCEEEEAKIRQRIFRPTRKQRKEERASLGLVTGSEIRKRNPDDFKPKGKLWADDDRSVDYNEKLDFEAPPSIWSRIVNFGSGWGFWVSPSLFITSTHVIPQGAQEFFGVPVKQIQIHKSGEFCRLRFPKPIRTDVTGMILEEGAPEGTVVTLLIKRSTGELMPLAARMGTHATMKIQGRTVGGQMGMLLTGSNAKSMDLGTTPGDCGCPYIYKRENDYVVIGVHTAAARGGNTVICATQGSEGEATLEGGDNKGTYCGAPILGPGSAPKLSTKTKFWRSSTAPLPPGTYEPAYLGGKDPRVKGGPSLQQVMRDQLKPFTEPRGKPPKPSVLEAAKRTIINVLEQTIDPPQKWSFTQACASLDKTTSSGHPHHMRKNDCWNGESFTGKLADQASKANLMFEEGKNMTPVYTGALKDELVKTDKIYGKIKKRLLWGSDLATMIRCARAFGGLMDELKAHCVTLPIRVGMNMNEDGPIIFERHSRYKYHYDADYSRWDSTQQRAVLAAALEIMVKFSPEPHLAQIVAEDLLSPSVMDVGDFKISINEGLPSGVPCTSQWNSIAHWLLTLCALSEVTNLSPDIIQANSLFSFYGDDEIVSTDINLNPEKLTAKLKEYGLKPTRPDKTEGPLIISEDLNGLTFLRRTVTRDPAGWFGKLDQSSILRQMYWTRGPNHEDPSETMIPHSQRPIQLMSLLGEAALHGPAFYSKISKLVIAELKEGGMDFYVPRQEPMFRWMRFSDLSTWEGDRNLAPSFVNEDGVE.

The span at 1–19 (MKMASNDASAAAVVNSNND) shows a compositional bias: low complexity. The segment at 1 to 78 (MKMASNDASA…PPPPPNGEDE (78 aa)) is disordered. The interval 1-116 (MKMASNDASA…AFSVPPLNQR (116 aa)) is interaction with host MAP1LC3A/LC3. Pro residues predominate over residues 46–74 (QPPPRETPQRPPRPPTPELVKKIPPPPPN). Residues 117–330 (ENRDAKEPLT…APLLGDYELQ (214 aa)) form an interaction with NTPase region. Positions 233-330 (RPYQDWNRKP…APLLGDYELQ (98 aa)) are interaction with NS4. Host ER membrane association stretches follow at residues 250–281 (KLKK…RPLN) and 292–330 (TFAG…YELQ). Positions 331–509 (GPEDLAVELV…GKTHLARELA (179 aa)) are interaction with NS1-2, NS4 and homooligomerization. In terms of domain architecture, SF3 helicase spans 465–632 (LARIAAARSL…EKAKRDFPGQ (168 aa)). 495–502 (GKPGIGKT) contacts ATP. Residues 586–691 (AIIITTNLAN…ASGLLHERLD (106 aa)) are important for mitochondrion targeting. Positions 764–770 (YTLESDG) are functions as endoplasmic reticulum export signal. The segment at 801 to 850 (RIRYYVKCVQEALYSIIQIAGAAFVTTRIVKRMNIQDLWSKPQVEDTEDT) is host membrane association. The segment at 843 to 894 (QVEDTEDTANKDGCPKPKDDEEFVVSSDDIKTEGKKGKNKTGRGKKHTAFSS) is disordered. Residues 850–861 (TANKDGCPKPKD) show a composition bias toward basic and acidic residues. Basic residues predominate over residues 879 to 890 (GKNKTGRGKKHT). The tract at residues 899–904 (DEEYDE) is acidic. Residue tyrosine 902 is modified to O-(5'-phospho-RNA)-tyrosine. The interval 992–1008 (WADDDRSVDYNEKLDFE) is interaction with host EIF4G. The Peptidase C37 domain maps to 1009-1189 (APPSIWSRIV…QGSEGEATLE (181 aa)). Residues histidine 1038, glutamate 1062, and cysteine 1147 each act as for 3CLpro activity in the active site. The region spanning 1425 to 1546 (KYHYDADYSR…STDINLNPEK (122 aa)) is the RdRp catalytic domain. Positions 1429, 1431, 1533, and 1534 each coordinate Mg(2+).

In terms of assembly, homodimer. Homooligomer. Interacts with NTPase; this interaction increases the proapoptotic activity of the NTPase and is crucial for the formation of the viral replication complex. Interacts with NS4; this interaction is crucial for the formation of the viral replication complex. Interacts (via N-terminus) with host VAPA. Interacts with host MAP1LC3A/LC3; this interaction does not seem to be linked to host autophagy, but rather plays a role in the formation of viral factories. Homooligomer. Interacts with NS1-2; this interaction increases the proapoptotic activity of the NTPase and is crucial for the formation of the viral replication complex. Interacts with NS4; this interaction increases the proapoptotic activity of the NTPase. As to quaternary structure, homodimer. Monomer; in solution. In terms of assembly, interacts with NTPase; this interaction increases the proapoptotic activity of the NTPase. Interacts with NS1-2; this interaction is crucial for the formation of the viral replication complex. Monomer. Interacts with the RNA-directed RNA polymerase; this interaction induces the multimerization of the RdRp and enhances its activity. Interacts with host IEF4G1; this interaction plays a role in translation of viral proteins. As to quaternary structure, homohexamer; also forms fibrous hexameric oligomer. Interacts with the viral genome-linked protein; this interaction induces the multimerization of the RdRp and enhances its activity. Mg(2+) serves as cofactor. Mn(2+) is required as a cofactor. Specific enzymatic cleavages in vivo yield mature proteins. 3CLpro is first autocatalytically cleaved, then processes the whole polyprotein. NS1/2-3 and NS3-4 sites are cleaved rapidly and NS4-5, NS5-6, and NS6-7 sites are processed subsequently and less efficiently. Post-translationally, VPg is uridylylated by the polymerase and is covalently attached to the 5'-end of the polyadenylated genomic and subgenomic RNAs. This uridylylated form acts as a nucleotide-peptide primer for the polymerase. In terms of processing, cleaved by host CASP3/caspase 3 at 18-22 h.p.i. The cleavage allows NS1 secretion, which is essential for intestinal infection and resistance to IFN-lambda.

The protein localises to the host endoplasmic reticulum membrane. It is found in the secreted. The protein resides in the host mitochondrion. Its subcellular location is the host Golgi apparatus membrane. It localises to the host cytoplasm. The protein localises to the host perinuclear region. The enzyme catalyses a ribonucleoside 5'-triphosphate + H2O = a ribonucleoside 5'-diphosphate + phosphate + H(+). The catalysed reaction is Endopeptidase with a preference for cleavage when the P1 position is occupied by Glu-|-Xaa and the P1' position is occupied by Gly-|-Yaa.. It catalyses the reaction RNA(n) + a ribonucleoside 5'-triphosphate = RNA(n+1) + diphosphate. Functionally, induces the proliferation of the host smooth ER membranes forming long tubular structures. These remodeled membranes probably form the viral factories that contain the replication complex. May play a role in viral replication by interacting with host VAPA, a vesicle-associated membrane protein that plays a role in SNARE-mediated vesicle fusion. This interaction may target replication complex to intracellular membranes. Displays NTPase activity, but no helicase activity. Displays RNA chaperone-like activity and destabilizes dsRNA. Induces the formation of convoluted membranes derived from the host ER. These remodeled membranes probably form the viral factories that contain the replication complex. Initiates host cell death by targeting the mitochondrial outer membrane, leading to the permeabilization of mitochondria, programmed host cell death and viral egress. Externalization of host cardiolipin seems to be involved in the process. Probably plays a role in preventing the assembly of host stress granules. Its function is as follows. Probable key protein responsible for the formation of membrane alterations by the virus. Induces the formation of convoluted membranes derived from the host ER. These remodeled membranes probably form the viral factories that contain the replication complex. May play a role in targeting replication complex to intracellular membranes. In terms of biological role, viral genome-linked protein is covalently linked to the 5'-end of the positive-strand, negative-strand genomic RNAs and subgenomic RNA. Acts as a genome-linked replication primer. May recruit ribosome to viral RNA thereby promoting viral proteins translation. Interacts with host translation initiation complex to allow the translation of viral proteins. Induces the formation of aggregates of RNA-directed RNA polymerase in the presence of RNA. Through its interaction with the viral RNA-directed RNA polymerase, plays a crucial role in enhancing the polymerase activity. Functionally, processes the polyprotein. 3CLpro-RdRp is first released by autocleavage, then all other proteins are cleaved. May cleave polyadenylate-binding protein thereby inhibiting cellular translation. Replicates genomic and antigenomic RNA by recognizing replications specific signals. Also transcribes a subgenomic mRNA by initiating RNA synthesis internally on antigenomic RNA. This sgRNA codes for structural proteins. Catalyzes the covalent attachment VPg with viral RNAs. This chain is Genome polyprotein, found in Lordsdale virus (strain GII/Human/United Kingdom/Lordsdale/1993) (Human enteric calicivirus).